Here is a 417-residue protein sequence, read N- to C-terminus: Vacuolar cation/proton exchanger 3 (417 aa).

At 1 to 45 (MENPQIEMGAFKANGPQLQNGGLRSSMVQSWNLQRFVESALRSIR) the chain is on the cytoplasmic side. Residues 46-66 (IVIFTSKLNLLLPFGPASIIL) form a helical membrane-spanning segment. The Extracellular portion of the chain corresponds to 67–73 (HYTTSRH). The helical transmembrane segment at 74–94 (GLVFLFSMLGITPLAERLGYA) threads the bilayer. Topologically, residues 95–105 (TEQLAIYTGPT) are cytoplasmic. Residues 106 to 126 (VGGLLNATFGNATEMIIAIYA) form a helical membrane-spanning segment. The cation selection stretch occupies residues 115–150 (GNATEMIIAIYALKNGMIRVVQQSLLGSILSNMLLV). Topologically, residues 127-140 (LKNGMIRVVQQSLL) are extracellular. Residues 141–161 (GSILSNMLLVMGCAFFAGGIV) form a helical membrane-spanning segment. Residues 162–173 (HRNKDQVFSKAT) are Cytoplasmic-facing. Residues 174–194 (AVVNSGLLLMAVMGLMFPAVL) form a helical membrane-spanning segment. Residues 195 to 207 (HFTHSEVRQGASE) are Extracellular-facing. Residues 208-230 (VSLSRFSSCIMLVAYASYLYFQL) form a helical membrane-spanning segment. At 231–258 (SGRNNAYSPIGSEEMPNEDAAEEDEESE) the chain is on the cytoplasmic side. Residues 259 to 279 (IGMWESIAWLAMLTLWVSILS) form a helical membrane-spanning segment. Residues 280–291 (EYLVNAIEGASD) lie on the Extracellular side of the membrane. A helical membrane pass occupies residues 292 to 312 (SLNLPVAFISVILLPIVGNAA). Residues 309-344 (GNAAEHASAIMFAMKDKLDITLGVAIGSSTQISMFV) form a cation selection region. The Cytoplasmic segment spans residues 313–330 (EHASAIMFAMKDKLDITL). Residues 331–351 (GVAIGSSTQISMFVIPFCVVI) form a helical membrane-spanning segment. The Extracellular portion of the chain corresponds to 352–360 (GWMMGQKMD). Residues 361–381 (LNFQLFETATLFITVLVVAFM) form a helical membrane-spanning segment. Residues 382 to 389 (LQDGVANY) are Cytoplasmic-facing. Residues 390–410 (LKGLMLILCYLIVAASFFVHV) form a helical membrane-spanning segment. Residues 411–417 (DPQSSDD) lie on the Extracellular side of the membrane.

Belongs to the Ca(2+):cation antiporter (CaCA) (TC 2.A.19) family. Cation/proton exchanger (CAX) subfamily. As to expression, ubiquitous.

The protein localises to the vacuole membrane. In terms of biological role, vacuolar cation/proton exchanger (CAX). Translocates Ca(2+) and other metal ions into vacuoles using the proton gradient formed by H(+)-ATPase and H(+)-pyrophosphatase. This is Vacuolar cation/proton exchanger 3 (CAX3) from Oryza sativa subsp. japonica (Rice).